The sequence spans 279 residues: Serine protease 29 (279 aa).

Residues Met1–Ala17 form the signal peptide. Residues Ile31–Gln276 enclose the Peptidase S1 domain. An intrachain disulfide couples Cys62 to Cys78. Residues His77 and Asp124 each act as charge relay system in the active site. 3 disulfide bridges follow: Cys158/Cys234, Cys191/Cys215, and Cys224/Cys252. Asn197 is a glycosylation site (N-linked (GlcNAc...) asparagine). Ser228 functions as the Charge relay system in the catalytic mechanism. The N-linked (GlcNAc...) asparagine glycan is linked to Asn235.

This sequence belongs to the peptidase S1 family. Homooligomer, heterodimer and heterotetramer. Able to form homo- and hetero- tetrameric structures. Heterotetramer is far more stable than the homotetramer. Expressed in embryos and placenta. Found in uterus especially in glandular epithelium during zona lysis and implantation.

The protein localises to the secreted. Its function is as follows. Involved in embryo hatching and implantation. The chain is Serine protease 29 (Prss29) from Mus musculus (Mouse).